The chain runs to 205 residues: Holliday junction branch migration complex subunit RuvA (205 aa).

Positions 1-64 (MIGRLRGTLA…EDAHLLYGFA (64 aa)) are domain I. The tract at residues 65–143 (EKRERELFRE…AWETSPAMFT (79 aa)) is domain II. The flexible linker stretch occupies residues 144–154 (LVSDGPLPVAS). Positions 154–205 (SESSAEADAVSALVSLGYKPQEASKAIAAIKDKAGLSSEELIRRSLKGMIAK) are domain III.

It belongs to the RuvA family. As to quaternary structure, homotetramer. Forms an RuvA(8)-RuvB(12)-Holliday junction (HJ) complex. HJ DNA is sandwiched between 2 RuvA tetramers; dsDNA enters through RuvA and exits via RuvB. An RuvB hexamer assembles on each DNA strand where it exits the tetramer. Each RuvB hexamer is contacted by two RuvA subunits (via domain III) on 2 adjacent RuvB subunits; this complex drives branch migration. In the full resolvosome a probable DNA-RuvA(4)-RuvB(12)-RuvC(2) complex forms which resolves the HJ.

Its subcellular location is the cytoplasm. Functionally, the RuvA-RuvB-RuvC complex processes Holliday junction (HJ) DNA during genetic recombination and DNA repair, while the RuvA-RuvB complex plays an important role in the rescue of blocked DNA replication forks via replication fork reversal (RFR). RuvA specifically binds to HJ cruciform DNA, conferring on it an open structure. The RuvB hexamer acts as an ATP-dependent pump, pulling dsDNA into and through the RuvAB complex. HJ branch migration allows RuvC to scan DNA until it finds its consensus sequence, where it cleaves and resolves the cruciform DNA. This is Holliday junction branch migration complex subunit RuvA from Pseudomonas entomophila (strain L48).